Here is an 89-residue protein sequence, read N- to C-terminus: UPF0367 protein MAE_19160 (89 aa).

This sequence belongs to the UPF0367 family.

This Microcystis aeruginosa (strain NIES-843 / IAM M-2473) protein is UPF0367 protein MAE_19160.